The sequence spans 379 residues: UDP-N-acetylglucosamine--N-acetylmuramyl-(pentapeptide) pyrophosphoryl-undecaprenol N-acetylglucosamine transferase (379 aa).

UDP-N-acetyl-alpha-D-glucosamine contacts are provided by residues 17-19 (TGG), N128, R169, S197, and Q298.

The protein belongs to the glycosyltransferase 28 family. MurG subfamily.

It is found in the cell inner membrane. The enzyme catalyses di-trans,octa-cis-undecaprenyl diphospho-N-acetyl-alpha-D-muramoyl-L-alanyl-D-glutamyl-meso-2,6-diaminopimeloyl-D-alanyl-D-alanine + UDP-N-acetyl-alpha-D-glucosamine = di-trans,octa-cis-undecaprenyl diphospho-[N-acetyl-alpha-D-glucosaminyl-(1-&gt;4)]-N-acetyl-alpha-D-muramoyl-L-alanyl-D-glutamyl-meso-2,6-diaminopimeloyl-D-alanyl-D-alanine + UDP + H(+). It functions in the pathway cell wall biogenesis; peptidoglycan biosynthesis. Its function is as follows. Cell wall formation. Catalyzes the transfer of a GlcNAc subunit on undecaprenyl-pyrophosphoryl-MurNAc-pentapeptide (lipid intermediate I) to form undecaprenyl-pyrophosphoryl-MurNAc-(pentapeptide)GlcNAc (lipid intermediate II). The polypeptide is UDP-N-acetylglucosamine--N-acetylmuramyl-(pentapeptide) pyrophosphoryl-undecaprenol N-acetylglucosamine transferase (Brucella abortus (strain S19)).